A 150-amino-acid chain; its full sequence is Small ribosomal subunit protein uS11y (150 aa).

Residues 129 to 150 (EDVTPVPTDSTRRKGGRRGRRL) form a disordered region. Over residues 141-150 (RKGGRRGRRL) the composition is skewed to basic residues.

This sequence belongs to the universal ribosomal protein uS11 family.

The sequence is that of Small ribosomal subunit protein uS11y from Zea mays (Maize).